Consider the following 333-residue polypeptide: 1D-myo-inositol 2-acetamido-2-deoxy-alpha-D-glucopyranoside deacetylase (333 aa).

The Zn(2+) site is built by His-18, Asp-21, and His-165.

Belongs to the MshB deacetylase family. It depends on Zn(2+) as a cofactor.

It catalyses the reaction 1D-myo-inositol 2-acetamido-2-deoxy-alpha-D-glucopyranoside + H2O = 1D-myo-inositol 2-amino-2-deoxy-alpha-D-glucopyranoside + acetate. Catalyzes the deacetylation of 1D-myo-inositol 2-acetamido-2-deoxy-alpha-D-glucopyranoside (GlcNAc-Ins) in the mycothiol biosynthesis pathway. In Corynebacterium jeikeium (strain K411), this protein is 1D-myo-inositol 2-acetamido-2-deoxy-alpha-D-glucopyranoside deacetylase.